The chain runs to 363 residues: 3-isopropylmalate dehydrogenase (363 aa).

G79–E92 lines the NAD(+) pocket. The substrate site is built by R100, R110, R139, and D228. 3 residues coordinate Mg(2+): D228, D252, and D256. Residue G286–N298 participates in NAD(+) binding.

The protein belongs to the isocitrate and isopropylmalate dehydrogenases family. LeuB type 1 subfamily. In terms of assembly, homodimer. Requires Mg(2+) as cofactor. It depends on Mn(2+) as a cofactor.

The protein resides in the cytoplasm. It catalyses the reaction (2R,3S)-3-isopropylmalate + NAD(+) = 4-methyl-2-oxopentanoate + CO2 + NADH. It participates in amino-acid biosynthesis; L-leucine biosynthesis; L-leucine from 3-methyl-2-oxobutanoate: step 3/4. In terms of biological role, catalyzes the oxidation of 3-carboxy-2-hydroxy-4-methylpentanoate (3-isopropylmalate) to 3-carboxy-4-methyl-2-oxopentanoate. The product decarboxylates to 4-methyl-2 oxopentanoate. The chain is 3-isopropylmalate dehydrogenase from Vibrio cholerae serotype O1 (strain ATCC 39315 / El Tor Inaba N16961).